The following is a 105-amino-acid chain: uncharacterized protein (105 aa).

The helical transmembrane segment at 64-84 threads the bilayer; it reads ILLISIFFLLLFALPQHTMGI.

It is found in the membrane. This is an uncharacterized protein from Saccharomyces cerevisiae (strain ATCC 204508 / S288c) (Baker's yeast).